The primary structure comprises 145 residues: Methyl-coenzyme M reductase I operon protein D (145 aa).

MCR is composed of three subunits: alpha, beta, and gamma. The function of proteins C and D is not known.

The protein is Methyl-coenzyme M reductase I operon protein D (mcrD) of Methanothermobacter marburgensis (strain ATCC BAA-927 / DSM 2133 / JCM 14651 / NBRC 100331 / OCM 82 / Marburg) (Methanobacterium thermoautotrophicum).